The chain runs to 235 residues: Proteasome subunit alpha type-2 (235 aa).

Belongs to the peptidase T1A family. The 26S proteasome consists of a 20S proteasome core and two 19S regulatory subunits. The 20S proteasome core is composed of 28 subunits that are arranged in four stacked rings, resulting in a barrel-shaped structure. The two end rings are each formed by seven alpha subunits, and the two central rings are each formed by seven beta subunits. The catalytic chamber with the active sites is on the inside of the barrel.

It is found in the cytoplasm. The protein resides in the nucleus. In terms of biological role, the proteasome is a multicatalytic proteinase complex which is characterized by its ability to cleave peptides with Arg, Phe, Tyr, Leu, and Glu adjacent to the leaving group at neutral or slightly basic pH. The proteasome has an ATP-dependent proteolytic activity. The protein is Proteasome subunit alpha type-2 (PAB1) of Oryza sativa subsp. indica (Rice).